Here is a 742-residue protein sequence, read N- to C-terminus: G2/M phase-specific E3 ubiquitin-protein ligase (742 aa).

The segment at 10–50 adopts a C2HC pre-PHD-type zinc-finger fold; the sequence is SPPCVLCGWTDNCPEKYGEKRTYVEYNLTLHNYCLLMSSGI. The segment at 78 to 127 adopts a PHD-type 1 zinc-finger fold; that stretch reads LMCNICRKKGASIGCVAPKCKRSYHFPCGLQKECVFQFMEDFRSYCWEHK. The segment at 142-192 adopts a PHD-type 2; degenerate zinc-finger fold; sequence QCTICLDLVEHLPLYSVLRSPCCKNTWFHRECLQYQALSAGIFFFRCAVCN. The PHD-type 3 zinc-finger motif lies at 236-285; sequence RCLCKNGRDYNKPDSKWEIKRCQSCGSRGTHLACSSIKSWEQNWECVECR. The region spanning 417 to 742 is the HECT domain; sequence KGFRQRNFRP…IRSTLRGERE (326 aa).

The protein resides in the nucleus. Its subcellular location is the nucleolus. It localises to the cytoplasm. It carries out the reaction S-ubiquitinyl-[E2 ubiquitin-conjugating enzyme]-L-cysteine + [acceptor protein]-L-lysine = [E2 ubiquitin-conjugating enzyme]-L-cysteine + N(6)-ubiquitinyl-[acceptor protein]-L-lysine.. The protein operates within protein modification; protein ubiquitination. Functionally, E3 ubiquitin-protein ligase which accepts ubiquitin from an E2 ubiquitin-conjugating enzyme in the form of a thioester and then directly transfers the ubiquitin to targeted substrates. Essential in early embryonic development to prevent apoptotic death. The sequence is that of G2/M phase-specific E3 ubiquitin-protein ligase (G2E3) from Gallus gallus (Chicken).